The sequence spans 190 residues: Protein LZIC (190 aa).

Residues 2–63 (ASRGKTETSK…SEFNDSLKKI (62 aa)) are a coiled coil.

This sequence belongs to the CTNNBIP1 family. In terms of assembly, does not interact with CTNNB1.

This Rattus norvegicus (Rat) protein is Protein LZIC (Lzic).